Reading from the N-terminus, the 122-residue chain is Large ribosomal subunit protein uL14 (122 aa).

The protein belongs to the universal ribosomal protein uL14 family. As to quaternary structure, part of the 50S ribosomal subunit. Forms a cluster with proteins L3 and L19. In the 70S ribosome, L14 and L19 interact and together make contacts with the 16S rRNA in bridges B5 and B8.

Binds to 23S rRNA. Forms part of two intersubunit bridges in the 70S ribosome. In Mycobacterium leprae (strain TN), this protein is Large ribosomal subunit protein uL14.